The sequence spans 351 residues: MWIVAGVCSGVAILLSFYLIYKHLRNYTNPELQKYIVRILIMVPIYSVDSWLSLRFVELSLYFDVVRDTYEAYVLYCFFSLIVAYIERDFDLVELLHSKEPLPHPFPLTCLPKIKLDRGFLTNCKRFVLQFVFIKPIVAIISLVLETQHKYGEGKFQVGTGYVWLTVVENISVGLSLYFLVLYYKAMEEELKPFKPLGKFLCIKSILFFSFWQSIAISFLVYFGVISPIGSWSVDNISSALQDFITCVEMVILAICHHFFFNYQEFRDPHKVPFIYDKTTKTFFNNPKTNITPIIKNFFTNVTNISDVISDTRETFILPLLSPDHHHNHPTTKKKDEESNLLEPEDKDIII.

Residues 1–21 form a helical membrane-spanning segment; that stretch reads MWIVAGVCSGVAILLSFYLIY. Residue Asn-26 is glycosylated (N-linked (GlcNAc...) asparagine). Helical transmembrane passes span 39-59, 73-93, 127-147, 162-182, and 206-226; these read ILIM…FVEL, YVLY…FDLV, FVLQ…VLET, YVWL…FLVL, and ILFF…FGVI. N-linked (GlcNAc...) asparagine glycosylation is present at Asn-236. Residues 241–261 traverse the membrane as a helical segment; that stretch reads LQDFITCVEMVILAICHHFFF. N-linked (GlcNAc...) asparagine glycans are attached at residues Asn-301 and Asn-304. The interval 327 to 351 is disordered; it reads HNHPTTKKKDEESNLLEPEDKDIII. Positions 339 to 351 are enriched in acidic residues; the sequence is SNLLEPEDKDIII.

Belongs to the TMEM184 family.

It is found in the cell membrane. In terms of biological role, probable transporter. This chain is Transmembrane protein 184 homolog DDB_G0279555 (tmem184C), found in Dictyostelium discoideum (Social amoeba).